Reading from the N-terminus, the 194-residue chain is Cysteine and glycine-rich protein 3 (194 aa).

The interaction with TCAP stretch occupies residues M1 to G5. The region spanning C10–C61 is the LIM zinc-binding 1 domain. The Nuclear localization signal motif lies at R64–K69. The segment at Q94 to S105 is interaction with CLF2. Phosphoserine occurs at positions 95, 111, and 153. In terms of domain architecture, LIM zinc-binding 2 spans C120–C171.

Self-associates. Oligomeric in the cytoplasm and monomeric in the nucleus. Homooligomers preferentially form along the actin cytoskeleton. Interacts with TCAP, ACTN2 and NRAP. Interacts with LDHD, SPTB, MYOD1, MYOG, MYF6. Interacts with GLRX3 (via C-terminus); GLRX3 and calcineurin compete for interaction with CSRP3. Interacts with CFL2; the stoichiometry influences F-actin depolymerization and possibly two molecules of CFL2 can interact with one molecule of CSRP3 resulting in the highest functional impact; the interaction is stronger with phosphorylated CFL2. Post-translationally, phosphorylated by PKC/PRKCA. In terms of tissue distribution, high in striated muscle and adult heart.

It is found in the nucleus. Its subcellular location is the cytoplasm. The protein resides in the cytoskeleton. The protein localises to the myofibril. It localises to the sarcomere. It is found in the z line. In terms of biological role, positive regulator of myogenesis. Acts as a cofactor for myogenic bHLH transcription factors such as MYOD1, and probably MYOG and MYF6. Enhances the DNA-binding activity of the MYOD1:TCF3 isoform E47 complex and may promote formation of a functional MYOD1:TCF3 isoform E47:MEF2A complex involved in myogenesis. Plays a crucial and specific role in the organization of cytosolic structures in cardiomyocytes. Could play a role in mechanical stretch sensing. May be a scaffold protein that promotes the assembly of interacting proteins at Z-line structures. It is essential for calcineurin anchorage to the Z line. Required for stress-induced calcineurin-NFAT activation. The role in regulation of cytoskeleton dynamics by association with CFL2 is reported conflictingly. Proposed to contribute to the maintenance of muscle cell integrity through an actin-based mechanism. Can directly bind to actin filaments, cross-link actin filaments into bundles without polarity selectivity and protect them from dilution- and cofilin-mediated depolymerization; the function seems to involve its self-association. In vitro can inhibit PKC/PRKCA activity. Proposed to be involved in cardiac stress signaling by down-regulating excessive PKC/PRKCA signaling. This Rattus norvegicus (Rat) protein is Cysteine and glycine-rich protein 3 (Csrp3).